We begin with the raw amino-acid sequence, 351 residues long: Methylxanthine N1-demethylase NdmA (351 aa).

Residues 17 to 125 (WHPVCTVTEL…CEERYGLIWI (109 aa)) form the Rieske domain. Cys62, His64, Cys81, and His84 together coordinate [2Fe-2S] cluster.

It depends on [2Fe-2S] cluster as a cofactor.

It carries out the reaction caffeine + NADH + O2 + H(+) = theobromine + formaldehyde + NAD(+) + H2O. The enzyme catalyses caffeine + NADPH + O2 + H(+) = theobromine + formaldehyde + NADP(+) + H2O. The catalysed reaction is theophylline + NADH + O2 + H(+) = 3-methylxanthine + formaldehyde + NAD(+) + H2O. It catalyses the reaction theophylline + NADPH + O2 + H(+) = 3-methylxanthine + formaldehyde + NADP(+) + H2O. It carries out the reaction 1,7-dimethylxanthine + NADH + O2 + H(+) = 7-methylxanthine + formaldehyde + NAD(+) + H2O. The enzyme catalyses 1,7-dimethylxanthine + NADPH + O2 + H(+) = 7-methylxanthine + formaldehyde + NADP(+) + H2O. It functions in the pathway alkaloid degradation. Functionally, involved in the caffeine degradation, which is the essential first step for assimilating the carbon and nitrogen in caffeine. Catalyzes the N1-demethylation of caffeine to produce theobromine and formaldehyde. Also catalyzes the N1-demethylation of theophylline, paraxanthine, and 1-methylxanthine to 3-methylxanthine, 7-methylxanthine, and xanthine, respectively. NADH is the preferred substrate. The polypeptide is Methylxanthine N1-demethylase NdmA (ndmA) (Pseudomonas putida (Arthrobacter siderocapsulatus)).